The sequence spans 201 residues: MPDLALEFEIGGIVCGIDEVGRGPLAGPVVAAAVILDPARLPKTLLERLDDSKKLSKRNREELAELVPATAILGFGEASVEEIDRINILQATFLAMRRAYDALGRECAHALVDGNRPPGLPCPVRCVVGGDGISLSIAAASVVAKVRRDAMMADLARAHPEFGWERNAGYGTAEHLDALKRLGPTPHHRRSFAPVAQYMLF.

The 190-residue stretch at 12-201 (GIVCGIDEVG…FAPVAQYMLF (190 aa)) folds into the RNase H type-2 domain. A divalent metal cation contacts are provided by Asp-18, Glu-19, and Asp-113.

This sequence belongs to the RNase HII family. The cofactor is Mn(2+). Requires Mg(2+) as cofactor.

It localises to the cytoplasm. It catalyses the reaction Endonucleolytic cleavage to 5'-phosphomonoester.. Functionally, endonuclease that specifically degrades the RNA of RNA-DNA hybrids. This is Ribonuclease HII (rnhB) from Paramagnetospirillum magneticum (strain ATCC 700264 / AMB-1) (Magnetospirillum magneticum).